The chain runs to 206 residues: RNA-binding protein (206 aa).

The interval 87 to 206 (PRGMQRGNRR…SGAKSKRRPR (120 aa)) is disordered. A compositionally biased stretch (basic and acidic residues) spans 109–132 (MPKDDSNDRKKAKTSKDRKVEKSS).

This sequence belongs to the phytoreovirus RNA-binding protein family.

The protein resides in the host cytoplasm. Its function is as follows. Constituent of viral factories. Binds to ssRNA and dsRNA. In Rice gall dwarf virus (RGDV), this protein is RNA-binding protein.